The chain runs to 655 residues: Protein nipi-3 (655 aa).

Positions 1 to 35 (MARTKCKTKTVANPRTGVRKTAKDLSEPVRQDAVS) are disordered. The span at 21-35 (TAKDLSEPVRQDAVS) shows a compositional bias: basic and acidic residues. Residues 200 to 470 (IGIFVIYGTG…NQVNGDFPEI (271 aa)) enclose the Protein kinase domain. Residues 206–214 (YGTGLVTRA) and lysine 235 each bind ATP.

This sequence belongs to the protein kinase superfamily. CAMK Ser/Thr protein kinase family. As to quaternary structure, may interact with transcription factor cebp-1 (via N-terminus). As to expression, expressed in epidermis, pharynx, intestine, a subset of head neurons and motoneurons.

The protein resides in the nucleus. Adapter protein that regulates different signaling pathways. Required for larval development and viability. Involved in negatively modulating pmk-1 p38/MAPK signaling. Involved in innate immunity, acting either in a manner dependent upon, or independent of, the pmk-1 or pmk-3 p38/MAPK pathways. Has a protective role in response to infection by the Gram-negative bacterium P.aeruginosa, acting by negatively modulating expression of cebp-1, and regulating the pmk-1 p38/MAPK pathway, leading to activation of transcription factor skn-1. Required to prevent P.aeruginosa toxin ToxA-mediated lethality, probably acting via modulating the effects of translational inhibition caused by the toxin. By regulating the up-regulation in the epidermis of antimicrobial peptides nlp-29 and nlp-31, plays a role in resistance to fungal infection. In Caenorhabditis elegans, this protein is Protein nipi-3.